The chain runs to 416 residues: D-amino acid dehydrogenase 2 (416 aa).

Residue 3–17 (ITVLGAGVVGTAAAY) participates in FAD binding.

It belongs to the DadA oxidoreductase family. FAD is required as a cofactor.

The enzyme catalyses a D-alpha-amino acid + A + H2O = a 2-oxocarboxylate + AH2 + NH4(+). Functionally, oxidative deamination of D-amino acids. The polypeptide is D-amino acid dehydrogenase 2 (dadA2) (Mesorhizobium japonicum (strain LMG 29417 / CECT 9101 / MAFF 303099) (Mesorhizobium loti (strain MAFF 303099))).